The sequence spans 446 residues: Tubulin beta-1 chain (446 aa).

GTP contacts are provided by glutamine 13, glutamate 71, serine 140, glycine 144, threonine 145, glycine 146, asparagine 206, and asparagine 228. Glutamate 71 provides a ligand contact to Mg(2+). The interval 421–446 (VSEYQQYQDASADDGEEYEEDAPMEE) is disordered. The segment covering 431-446 (SADDGEEYEEDAPMEE) has biased composition (acidic residues).

The protein belongs to the tubulin family. Dimer of alpha and beta chains. A typical microtubule is a hollow water-filled tube with an outer diameter of 25 nm and an inner diameter of 15 nM. Alpha-beta heterodimers associate head-to-tail to form protofilaments running lengthwise along the microtubule wall with the beta-tubulin subunit facing the microtubule plus end conferring a structural polarity. Microtubules usually have 13 protofilaments but different protofilament numbers can be found in some organisms and specialized cells. It depends on Mg(2+) as a cofactor.

The protein resides in the cytoplasm. Its subcellular location is the cytoskeleton. Its function is as follows. Tubulin is the major constituent of microtubules, a cylinder consisting of laterally associated linear protofilaments composed of alpha- and beta-tubulin heterodimers. Microtubules grow by the addition of GTP-tubulin dimers to the microtubule end, where a stabilizing cap forms. Below the cap, tubulin dimers are in GDP-bound state, owing to GTPase activity of alpha-tubulin. This chain is Tubulin beta-1 chain (tub1), found in Hypocrea rufa (Trichoderma viride).